A 311-amino-acid polypeptide reads, in one-letter code: MFYTTVGKIIKELNLECLTEISGIEERKIKDMNLNRPALQLMGFFEYFDEQRVQIIGISEMAYLKTMTPSQRRDAIERLFQRNIPCVIITSNQEPFEEFLEFSKKYGVPLLRTQEVTTRFMTNLSTFLTHELAPRITRHGTLVNVYGEGVLMLGESGVGKSETALELVKRGHILVADDAVEIRKVSEKTLVGEAPEIIRHLIEIRGIGILDVKNLFGVGCVKESERIDLVIQLETWKQGKEYERLGLHDQYIEILGIKVPTLVIPVRPGRNLAIIVEVAAMNNRQKKMGYNAAKALTERLQKQMSRGNGAE.

Residues His139 and Lys160 contribute to the active site. ATP is bound at residue 154–161 (GESGVGKS). Ser161 provides a ligand contact to Mg(2+). The Proton acceptor; for phosphorylation activity. Proton donor; for dephosphorylation activity role is filled by Asp178. Residues 202 to 211 (IEIRGIGILD) form an important for the catalytic mechanism of both phosphorylation and dephosphorylation region. Glu203 contacts Mg(2+). Arg244 is an active-site residue. Residues 265 to 270 (PVRPGR) form an important for the catalytic mechanism of dephosphorylation region.

Belongs to the HPrK/P family. In terms of assembly, homohexamer. It depends on Mg(2+) as a cofactor.

It carries out the reaction [HPr protein]-L-serine + ATP = [HPr protein]-O-phospho-L-serine + ADP + H(+). It catalyses the reaction [HPr protein]-O-phospho-L-serine + phosphate + H(+) = [HPr protein]-L-serine + diphosphate. Its function is as follows. Catalyzes the ATP- as well as the pyrophosphate-dependent phosphorylation of a specific serine residue in HPr, a phosphocarrier protein of the phosphoenolpyruvate-dependent sugar phosphotransferase system (PTS). HprK/P also catalyzes the pyrophosphate-producing, inorganic phosphate-dependent dephosphorylation (phosphorolysis) of seryl-phosphorylated HPr (P-Ser-HPr). The two antagonistic activities of HprK/P are regulated by several intracellular metabolites, which change their concentration in response to the absence or presence of rapidly metabolisable carbon sources (glucose, fructose, etc.) in the growth medium. Therefore, by controlling the phosphorylation state of HPr, HPrK/P is a sensor enzyme that plays a major role in the regulation of carbon metabolism and sugar transport: it mediates carbon catabolite repression (CCR), and regulates PTS-catalyzed carbohydrate uptake and inducer exclusion. The sequence is that of HPr kinase/phosphorylase from Caldicellulosiruptor bescii (strain ATCC BAA-1888 / DSM 6725 / KCTC 15123 / Z-1320) (Anaerocellum thermophilum).